A 475-amino-acid chain; its full sequence is Squamosa promoter-binding-like protein 12 (475 aa).

A disordered region spans residues 49–73; that stretch reads NHGSTNSSGGTFTSSSELANGSSKS. The segment covering 51–73 has biased composition (low complexity); the sequence is GSTNSSGGTFTSSSELANGSSKS. The SBP-type zinc-finger motif lies at 177 to 254; it reads SSYCQVEGCK…SDHNARRRKP (78 aa). Zn(2+) contacts are provided by Cys180, Cys185, Cys202, His205, Cys221, Cys224, His228, and Cys240. The Bipartite nuclear localization signal signature appears at 237–253; that stretch reads KKSCRRRLSDHNARRRK. Residues 437-475 form a disordered region; it reads GGGGFWQDGDDPPPLDHASQAQAFMHPGNGSSSGYGHLH. Positions 465–475 are enriched in polar residues; it reads NGSSSGYGHLH.

In terms of tissue distribution, expressed in young panicles.

The protein resides in the nucleus. Trans-acting factor that binds specifically to the consensus nucleotide sequence 5'-TNCGTACAA-3'. May be involved in panicle development. The protein is Squamosa promoter-binding-like protein 12 (SPL12) of Oryza sativa subsp. japonica (Rice).